A 143-amino-acid chain; its full sequence is Large ribosomal subunit protein uL11 (143 aa).

The protein belongs to the universal ribosomal protein uL11 family. In terms of assembly, part of the ribosomal stalk of the 50S ribosomal subunit. Interacts with L10 and the large rRNA to form the base of the stalk. L10 forms an elongated spine to which L12 dimers bind in a sequential fashion forming a multimeric L10(L12)X complex. One or more lysine residues are methylated.

Its function is as follows. Forms part of the ribosomal stalk which helps the ribosome interact with GTP-bound translation factors. This chain is Large ribosomal subunit protein uL11, found in Halorhodospira halophila (strain DSM 244 / SL1) (Ectothiorhodospira halophila (strain DSM 244 / SL1)).